The following is a 76-amino-acid chain: MKLTILFLVAAVLMSTQALIQHDGEKSQKAKMKFLTARTLSAKTRGVDCVGLSSYCGPWNNPPCCSWYTCDYYCKF.

Residues 1–18 form the signal peptide; it reads MKLTILFLVAAVLMSTQA. Residues 19 to 45 constitute a propeptide that is removed on maturation; it reads LIQHDGEKSQKAKMKFLTARTLSAKTR. Intrachain disulfides connect Cys-49/Cys-65, Cys-56/Cys-70, and Cys-64/Cys-74.

This sequence belongs to the conotoxin O2 superfamily. Expressed by the venom duct.

It localises to the secreted. The protein is Conotoxin VnMEKL-0111 of Conus ventricosus (Mediterranean cone).